The primary structure comprises 243 residues: Pyridoxine 5'-phosphate synthase (243 aa).

N9 lines the 3-amino-2-oxopropyl phosphate pocket. 11-12 (DH) lines the 1-deoxy-D-xylulose 5-phosphate pocket. R20 provides a ligand contact to 3-amino-2-oxopropyl phosphate. H45 serves as the catalytic Proton acceptor. 1-deoxy-D-xylulose 5-phosphate-binding residues include R47 and H52. E72 functions as the Proton acceptor in the catalytic mechanism. T102 contacts 1-deoxy-D-xylulose 5-phosphate. H193 acts as the Proton donor in catalysis. 3-amino-2-oxopropyl phosphate-binding positions include G194 and 215 to 216 (GH).

This sequence belongs to the PNP synthase family. Homooctamer; tetramer of dimers.

It localises to the cytoplasm. It carries out the reaction 3-amino-2-oxopropyl phosphate + 1-deoxy-D-xylulose 5-phosphate = pyridoxine 5'-phosphate + phosphate + 2 H2O + H(+). It functions in the pathway cofactor biosynthesis; pyridoxine 5'-phosphate biosynthesis; pyridoxine 5'-phosphate from D-erythrose 4-phosphate: step 5/5. Functionally, catalyzes the complicated ring closure reaction between the two acyclic compounds 1-deoxy-D-xylulose-5-phosphate (DXP) and 3-amino-2-oxopropyl phosphate (1-amino-acetone-3-phosphate or AAP) to form pyridoxine 5'-phosphate (PNP) and inorganic phosphate. The sequence is that of Pyridoxine 5'-phosphate synthase from Salmonella typhi.